A 311-amino-acid chain; its full sequence is MIASYRGRDFLSMNDLTGEEIEEVLDLASELKIRQKKGISTPILKGKTLAMIFSKNSTRTRVSFEVGMVQLGGYPLFITATDSQLSRGEPIADTARVLSRMVDGIMIRTYSHSEVEELAYYADVPVINGLTDYEHPCQIMADLLTIKEHKGQLRGLKVAWVGDGNNVCHSLMIGAAKVGMEVAVATPPGYEPDQKVSLIAQKETSRWGTKLLLTHDPVEAVTGADVVVTDVWASMGQEAESAERVKVFEPYQVNGELVSHAKQDFIFLHCLPAHRGEEVTAEVIDGEHSVVFAEAENRLHAQKAILTLLLG.

Residues 57–60 (STRT), glutamine 84, arginine 108, and 135–138 (HPCQ) contribute to the carbamoyl phosphate site. L-ornithine contacts are provided by residues asparagine 166, aspartate 230, and 234 to 235 (SM). Carbamoyl phosphate-binding positions include 270-271 (CL) and arginine 298.

Belongs to the aspartate/ornithine carbamoyltransferase superfamily. OTCase family.

It is found in the cytoplasm. The enzyme catalyses carbamoyl phosphate + L-ornithine = L-citrulline + phosphate + H(+). It functions in the pathway amino-acid biosynthesis; L-arginine biosynthesis; L-arginine from L-ornithine and carbamoyl phosphate: step 1/3. Its function is as follows. Reversibly catalyzes the transfer of the carbamoyl group from carbamoyl phosphate (CP) to the N(epsilon) atom of ornithine (ORN) to produce L-citrulline. The polypeptide is Ornithine carbamoyltransferase (Carboxydothermus hydrogenoformans (strain ATCC BAA-161 / DSM 6008 / Z-2901)).